The chain runs to 891 residues: Alanine--tRNA ligase (891 aa).

The Zn(2+) site is built by His-564, His-568, Cys-677, and His-681.

It belongs to the class-II aminoacyl-tRNA synthetase family. Zn(2+) is required as a cofactor.

The protein resides in the cytoplasm. It carries out the reaction tRNA(Ala) + L-alanine + ATP = L-alanyl-tRNA(Ala) + AMP + diphosphate. Functionally, catalyzes the attachment of alanine to tRNA(Ala) in a two-step reaction: alanine is first activated by ATP to form Ala-AMP and then transferred to the acceptor end of tRNA(Ala). Also edits incorrectly charged Ser-tRNA(Ala) and Gly-tRNA(Ala) via its editing domain. The chain is Alanine--tRNA ligase from Bradyrhizobium sp. (strain ORS 278).